Consider the following 312-residue polypeptide: tRNA dimethylallyltransferase (312 aa).

12 to 19 provides a ligand contact to ATP; it reads GPTAIGKS. 14-19 is a substrate binding site; the sequence is TAIGKS. 2 interaction with substrate tRNA regions span residues 38–41 and 162–166; these read DSKL and QRVLR.

It belongs to the IPP transferase family. In terms of assembly, monomer. Mg(2+) serves as cofactor.

The catalysed reaction is adenosine(37) in tRNA + dimethylallyl diphosphate = N(6)-dimethylallyladenosine(37) in tRNA + diphosphate. Its function is as follows. Catalyzes the transfer of a dimethylallyl group onto the adenine at position 37 in tRNAs that read codons beginning with uridine, leading to the formation of N6-(dimethylallyl)adenosine (i(6)A). The sequence is that of tRNA dimethylallyltransferase from Buchnera aphidicola subsp. Cinara cedri (strain Cc).